Reading from the N-terminus, the 244-residue chain is MLMSTSPSPWLAAAMLCIGLANAHTVIVYPGYRGNNLHTTGTVEGADGLGIAWSSDNETLIYPYGMQWSYPCGGMPTSENRTKWPVQGGAVSFQPGWFQGHSRAQIYINIGLGTVPPNMSHPMITPFEIVGPDNDPYPGTICLPQVRLPAGIEVQVGDNATIQVIELAQHGAALYNCADITFAEPEDVAEVNSTNCFNSSHISFETIFTTSSLENAGLEAVTVPSFLTAVVPTFLGIAYGLLMA.

Residues 1–23 form the signal peptide; that stretch reads MLMSTSPSPWLAAAMLCIGLANA. Residue His-24 coordinates Cu(2+). A Methylhistidine modification is found at His-24. Asn-57, Asn-80, Asn-118, Asn-159, Asn-192, and Asn-198 each carry an N-linked (GlcNAc...) asparagine glycan. Disulfide bonds link Cys-72–Cys-177 and Cys-142–Cys-196. A lipid anchor (GPI-anchor amidated asparagine) is attached at Asn-215. Residues 216–244 constitute a propeptide, removed in mature form; sequence AGLEAVTVPSFLTAVVPTFLGIAYGLLMA.

Belongs to the X325 family. Cu(2+) serves as cofactor. Post-translationally, the catalytically essential N-terminal histidine His-24 is post-translationally modified by methylation to prevent protonation of the histidine side chain, and protect the critical active site of the enzyme from oxidative damage.

The protein resides in the cell membrane. Its function is as follows. Lytic polysaccharide monooxygenase-like protein that has diverged to biological functions other than polysaccharide degradation since it does not perform oxidative cleavage of polysaccharides. Acts as a cell surface-bound protein that functions in the copper-accumulation pathway. May also act as the major cell wall sensor that regulates MAP kinase-dependent hyphal anastomosis, the fusion of hyphal cells. The polypeptide is Lytic polysaccharide monooxygenase-like protein ANIA_04702 (Emericella nidulans (strain FGSC A4 / ATCC 38163 / CBS 112.46 / NRRL 194 / M139) (Aspergillus nidulans)).